The sequence spans 433 residues: Trigger factor (433 aa).

Positions 163 to 248 (GNFVVIDFVG…VKEAKVKELP (86 aa)) constitute a PPIase FKBP-type domain.

It belongs to the FKBP-type PPIase family. Tig subfamily.

It localises to the cytoplasm. The enzyme catalyses [protein]-peptidylproline (omega=180) = [protein]-peptidylproline (omega=0). Its function is as follows. Involved in protein export. Acts as a chaperone by maintaining the newly synthesized protein in an open conformation. Functions as a peptidyl-prolyl cis-trans isomerase. The protein is Trigger factor of Geobacter metallireducens (strain ATCC 53774 / DSM 7210 / GS-15).